Consider the following 297-residue polypeptide: Coatomer subunit epsilon-2 (297 aa).

This sequence belongs to the COPE family. Oligomeric complex that consists of at least the alpha, beta, beta', gamma, delta, epsilon and zeta subunits.

Its subcellular location is the cytoplasm. The protein localises to the golgi apparatus membrane. It localises to the cytoplasmic vesicle. It is found in the COPI-coated vesicle membrane. Functionally, the coatomer is a cytosolic protein complex that binds to dilysine motifs and reversibly associates with Golgi non-clathrin-coated vesicles, which further mediate biosynthetic protein transport from the ER, via the Golgi up to the trans Golgi network. The coatomer complex is required for budding from Golgi membranes, and is essential for the retrograde Golgi-to-ER transport of dilysine-tagged proteins. This is Coatomer subunit epsilon-2 from Oryza sativa subsp. japonica (Rice).